Here is a 470-residue protein sequence, read N- to C-terminus: ATP synthase subunit beta (470 aa).

158–165 (GGAGVGKT) is a binding site for ATP.

It belongs to the ATPase alpha/beta chains family. F-type ATPases have 2 components, CF(1) - the catalytic core - and CF(0) - the membrane proton channel. CF(1) has five subunits: alpha(3), beta(3), gamma(1), delta(1), epsilon(1). CF(0) has three main subunits: a(1), b(2) and c(9-12). The alpha and beta chains form an alternating ring which encloses part of the gamma chain. CF(1) is attached to CF(0) by a central stalk formed by the gamma and epsilon chains, while a peripheral stalk is formed by the delta and b chains.

It is found in the cell membrane. It carries out the reaction ATP + H2O + 4 H(+)(in) = ADP + phosphate + 5 H(+)(out). Functionally, produces ATP from ADP in the presence of a proton gradient across the membrane. The catalytic sites are hosted primarily by the beta subunits. This chain is ATP synthase subunit beta, found in Alkalihalophilus pseudofirmus (strain ATCC BAA-2126 / JCM 17055 / OF4) (Bacillus pseudofirmus).